The following is a 335-amino-acid chain: L-lactate dehydrogenase B chain (335 aa).

Residues 29 to 57 (GQVG…VEDK) and Arg99 contribute to the NAD(+) site. Arg106, Asn138, and Arg169 together coordinate substrate. Asn138 lines the NAD(+) pocket. His193 serves as the catalytic Proton acceptor. A substrate-binding site is contributed by Thr248.

Belongs to the LDH/MDH superfamily. LDH family. In terms of assembly, homotetramer.

Its subcellular location is the cytoplasm. It catalyses the reaction (S)-lactate + NAD(+) = pyruvate + NADH + H(+). Its pathway is fermentation; pyruvate fermentation to lactate; (S)-lactate from pyruvate: step 1/1. Functionally, interconverts simultaneously and stereospecifically pyruvate and lactate with concomitant interconversion of NADH and NAD(+). The polypeptide is L-lactate dehydrogenase B chain (LDHB) (Sceloporus undulatus (Eastern fence lizard)).